The primary structure comprises 313 residues: Porphobilinogen deaminase (313 aa).

Position 242 is an S-(dipyrrolylmethanemethyl)cysteine (Cys-242).

This sequence belongs to the HMBS family. As to quaternary structure, monomer. It depends on dipyrromethane as a cofactor.

The catalysed reaction is 4 porphobilinogen + H2O = hydroxymethylbilane + 4 NH4(+). The protein operates within porphyrin-containing compound metabolism; protoporphyrin-IX biosynthesis; coproporphyrinogen-III from 5-aminolevulinate: step 2/4. In terms of biological role, tetrapolymerization of the monopyrrole PBG into the hydroxymethylbilane pre-uroporphyrinogen in several discrete steps. In Pseudomonas entomophila (strain L48), this protein is Porphobilinogen deaminase.